Consider the following 317-residue polypeptide: OVARIAN TUMOR DOMAIN-containing deubiquitinating enzyme 4 (317 aa).

Positions Y168 to H306 constitute an OTU domain. The active site involves D176. Residue C179 is the Nucleophile of the active site. H299 is a catalytic residue.

Belongs to the peptidase C65 family.

It localises to the cytoplasm. The enzyme catalyses Thiol-dependent hydrolysis of ester, thioester, amide, peptide and isopeptide bonds formed by the C-terminal Gly of ubiquitin (a 76-residue protein attached to proteins as an intracellular targeting signal).. Hydrolase that can remove conjugated ubiquitin from proteins in vitro and may therefore play an important regulatory role at the level of protein turnover by preventing degradation. Cysteine protease with a preference for 'Lys-63' over 'Lys-48'-linked over 'Met-1' ubiquitin (UB) tetramers (e.g. Ub3 and Ub4) as substrates. Also cleaves RUB-GST fusion. This Arabidopsis thaliana (Mouse-ear cress) protein is OVARIAN TUMOR DOMAIN-containing deubiquitinating enzyme 4.